An 835-amino-acid chain; its full sequence is Lon protease (835 aa).

In terms of domain architecture, Lon N-terminal spans 4–224 (LPYIAIRNQL…LAINMLINAI (221 aa)). An ATP-binding site is contributed by 412–419 (GPPGTGKT). Positions 649–832 (QPKAGVVNAL…DEIFKYIFEA (184 aa)) constitute a Lon proteolytic domain. Residues S738 and K781 contribute to the active site.

Belongs to the peptidase S16 family. As to quaternary structure, homohexamer. Organized in a ring with a central cavity.

The protein localises to the cytoplasm. It carries out the reaction Hydrolysis of proteins in presence of ATP.. In terms of biological role, ATP-dependent serine protease that mediates the selective degradation of mutant and abnormal proteins as well as certain short-lived regulatory proteins. Required for cellular homeostasis and for survival from DNA damage and developmental changes induced by stress. Degrades polypeptides processively to yield small peptide fragments that are 5 to 10 amino acids long. Binds to DNA in a double-stranded, site-specific manner. The sequence is that of Lon protease from Metamycoplasma arthritidis (strain 158L3-1) (Mycoplasma arthritidis).